The sequence spans 84 residues: Large ribosomal subunit protein bL31B (84 aa).

Belongs to the bacterial ribosomal protein bL31 family. Type B subfamily. In terms of assembly, part of the 50S ribosomal subunit.

The protein is Large ribosomal subunit protein bL31B of Streptomyces griseus subsp. griseus (strain JCM 4626 / CBS 651.72 / NBRC 13350 / KCC S-0626 / ISP 5235).